The chain runs to 789 residues: Glycerol-3-phosphate acyltransferase (789 aa).

The HXXXXD motif signature appears at Ser275 to Ile280.

The protein belongs to the GPAT/DAPAT family.

Its subcellular location is the cell membrane. It catalyses the reaction sn-glycerol 3-phosphate + an acyl-CoA = a 1-acyl-sn-glycero-3-phosphate + CoA. It participates in phospholipid metabolism; CDP-diacylglycerol biosynthesis; CDP-diacylglycerol from sn-glycerol 3-phosphate: step 1/3. In Mycobacterium bovis (strain BCG / Pasteur 1173P2), this protein is Glycerol-3-phosphate acyltransferase.